A 930-amino-acid polypeptide reads, in one-letter code: A disintegrin and metalloproteinase with thrombospondin motifs 5 (930 aa).

The N-terminal stretch at 1–16 (MLLGWASLLLCAFRLP) is a signal peptide. Positions 17-261 (LAAVGPAATP…PQTWWRRRRR (245 aa)) are excised as a propeptide. Disordered regions lie at residues 24-69 (ATPA…QRRR) and 206-231 (RASC…PSGR). Residues 31–42 (AGQPPTAAAAAQ) are compositionally biased toward low complexity. A compositionally biased stretch (basic and acidic residues) spans 46–59 (RQGEEVQERAEPPG). A Cysteine switch motif is present at residues 207-214 (ASCETPAS). Residue C209 coordinates Zn(2+). A Peptidase M12B domain is found at 267–476 (RQVELLLVAD…GHGNCLLDLP (210 aa)). 8 disulfides stabilise this stretch: C342/C394, C371/C376, C388/C471, C426/C455, C497/C519, C508/C529, C514/C548, and C542/C553. Position 410 (H410) interacts with Zn(2+). The active site involves E411. Residues H414 and H420 each contribute to the Zn(2+) site. The 82-residue stretch at 485–566 (ELPGQTYDAT…TKKKYYSTSS (82 aa)) folds into the Disintegrin domain. N-linked (GlcNAc...) asparagine glycosylation is present at N498. One can recognise a TSP type-1 1 domain in the interval 567-622 (HGNWGSWGSWGQCSRSCGGGVQFAYRHCNNPAPRNNGRYCTGKRAIYRSCSLMPCP). C-linked (Man) tryptophan glycans are attached at residues W570 and W573. Disulfide bonds link C579–C616, C583–C621, and C594–C606. O-linked (Fuc...) serine glycosylation occurs at S582. 3 N-linked (GlcNAc...) asparagine glycosylation sites follow: N728, N802, and N807. The spacer stretch occupies residues 732-874 (TKIVGTFNKK…HGSNKVGSHT (143 aa)). In terms of domain architecture, TSP type-1 2 spans 875–929 (SQPQWVTGPWLACSRTCDTGWHTRTVQCQDGNRKLAKGCPLSQRPSAFKQCLLKK).

Zn(2+) is required as a cofactor. Post-translationally, the precursor is cleaved by furin and PCSK7 outside of the cell. Glycosylated. Can be O-fucosylated by POFUT2 on a serine or a threonine residue found within the consensus sequence C1-X(2)-(S/T)-C2-G of the TSP type-1 repeat domains where C1 and C2 are the first and second cysteine residue of the repeat, respectively. Fucosylated repeats can then be further glycosylated by the addition of a beta-1,3-glucose residue by the glucosyltransferase, B3GALTL. Fucosylation mediates the efficient secretion of ADAMTS family members. Can also be C-glycosylated with one or two mannose molecules on tryptophan residues within the consensus sequence W-X-X-W of the TPRs, and N-glycosylated. These other glycosylations can also facilitate secretion. In terms of tissue distribution, expressed at low level in placenta primarily but also detected in heart and brain, cervix, uterus, bladder, esophagus, rib cartilage, chondroblastoma, fibrous tissue and a joint capsule from an arthritic patient.

It is found in the secreted. Its subcellular location is the extracellular space. It localises to the extracellular matrix. Its function is as follows. Metalloproteinase that plays an important role in connective tissue organization, development, inflammation and cell migration. Extracellular matrix (ECM) degrading enzyme that show proteolytic activity toward the hyalectan group of chondroitin sulfate proteoglycans (CSPGs) including ACAN, VCAN, BCAN and NCAN. Cleavage within the hyalectans occurs at Glu-Xaa recognition motifs. Plays a role in embryonic development, including limb and cardiac morphogenesis, and skeletal muscle development through its VCAN remodeling properties. Cleaves VCAN in the pericellular matrix surrounding myoblasts, facilitating myoblast contact and fusion which is required for skeletal muscle development and regeneration. Participates in development of brown adipose tissue and browning of white adipose tissue. Plays an important role for T-lymphocyte migration from draining lymph nodes following viral infection. This is A disintegrin and metalloproteinase with thrombospondin motifs 5 (ADAMTS5) from Homo sapiens (Human).